Here is a 356-residue protein sequence, read N- to C-terminus: Methylthioribose-1-phosphate isomerase (356 aa).

D234 functions as the Proton donor in the catalytic mechanism.

The protein belongs to the eIF-2B alpha/beta/delta subunits family. MtnA subfamily.

The protein resides in the cytoplasm. Its subcellular location is the nucleus. It carries out the reaction 5-(methylsulfanyl)-alpha-D-ribose 1-phosphate = 5-(methylsulfanyl)-D-ribulose 1-phosphate. Its pathway is amino-acid biosynthesis; L-methionine biosynthesis via salvage pathway; L-methionine from S-methyl-5-thio-alpha-D-ribose 1-phosphate: step 1/6. In terms of biological role, catalyzes the interconversion of methylthioribose-1-phosphate (MTR-1-P) into methylthioribulose-1-phosphate (MTRu-1-P). The sequence is that of Methylthioribose-1-phosphate isomerase (mri1) from Schizosaccharomyces japonicus (strain yFS275 / FY16936) (Fission yeast).